Consider the following 854-residue polypeptide: Protein mono-ADP-ribosyltransferase PARP9 (854 aa).

2 Macro domains span residues 107–296 (LQVF…EFIL) and 306–487 (TPSF…AKRS). A PARP catalytic domain is found at 628–850 (IQQQKTQDEM…QHPWRGFASG (223 aa)).

Belongs to the ARTD/PARP family. In terms of assembly, forms a stable complex with E3 ligase DTX3L; the interaction is required for PARP9 mediated ADP-ribosylation of ubiquitin. Interacts (via PARP catalytic domain) with DTX3L (via N-terminus). Forms a complex with STAT1 and DTX3L independently of IFNB1 or IFNG-mediated STAT1 'Tyr-701' phosphorylation. Forms a complex with STAT1, DTX3L and histone H2B H2BC9/H2BJ; the interaction is likely to induce H2BC9/H2BJ ubiquitination. Interacts (via N-terminus) with STAT1. Interacts with PARP14 in IFNG-stimulated macrophages; the interaction prevents PARP14-mediated STAT1 and STAT6 ADP-riboslylation. Interacts with PARP1 (when poly-ADP-ribosylated). Post-translationally, ADP-ribosylated by PARP14. Expressed in lymphocyte-rich tissues, spleen, lymph nodes, peripheral blood lymphocytes and colonic mucosa. Expressed in macrophages. Also expressed in nonhematopoietic tissues such as heart and skeletal muscle. Isoform 2 is the predominant form. Most abundantly expressed in lymphomas with a brisk host inflammatory response. In diffuse large B-cell lymphomas tumors, expressed specifically by malignant B-cells.

It localises to the cytoplasm. The protein localises to the cytosol. It is found in the nucleus. The catalysed reaction is [protein]-C-terminal glycine + NAD(+) = [protein]-C-terminal O-(ADP-D-ribosyl)-glycine + nicotinamide. Binding to poly(ADP-ribose) does not affect its activity. Functionally, ADP-ribosyltransferase which, in association with E3 ligase DTX3L, plays a role in DNA damage repair and in immune responses including interferon-mediated antiviral defenses. Within the complex, enhances DTX3L E3 ligase activity which is further enhanced by PARP9 binding to poly(ADP-ribose). In association with DTX3L and in presence of E1 and E2 enzymes, mediates NAD(+)-dependent mono-ADP-ribosylation of ubiquitin which prevents ubiquitin conjugation to substrates such as histones. During DNA repair, PARP1 recruits PARP9/BAL1-DTX3L complex to DNA damage sites via PARP9 binding to ribosylated PARP1. Subsequent PARP1-dependent PARP9/BAL1-DTX3L-mediated ubiquitination promotes the rapid and specific recruitment of 53BP1/TP53BP1, UIMC1/RAP80, and BRCA1 to DNA damage sites. In response to DNA damage, PARP9-DTX3L complex is required for efficient non-homologous end joining (NHEJ); the complex function is negatively modulated by PARP9 activity. Dispensable for B-cell receptor (BCR) assembly through V(D)J recombination and class switch recombination (CSR). In macrophages, positively regulates pro-inflammatory cytokines production in response to IFNG stimulation by suppressing PARP14-mediated STAT1 ADP-ribosylation and thus promoting STAT1 phosphorylation. Also suppresses PARP14-mediated STAT6 ADP-ribosylation. This is Protein mono-ADP-ribosyltransferase PARP9 (PARP9) from Homo sapiens (Human).